The primary structure comprises 370 residues: Histidinol-phosphate aminotransferase (370 aa).

Lys220 is subject to N6-(pyridoxal phosphate)lysine.

Belongs to the class-II pyridoxal-phosphate-dependent aminotransferase family. Histidinol-phosphate aminotransferase subfamily. As to quaternary structure, homodimer. Requires pyridoxal 5'-phosphate as cofactor.

The catalysed reaction is L-histidinol phosphate + 2-oxoglutarate = 3-(imidazol-4-yl)-2-oxopropyl phosphate + L-glutamate. The protein operates within amino-acid biosynthesis; L-histidine biosynthesis; L-histidine from 5-phospho-alpha-D-ribose 1-diphosphate: step 7/9. The polypeptide is Histidinol-phosphate aminotransferase (Granulibacter bethesdensis (strain ATCC BAA-1260 / CGDNIH1)).